A 201-amino-acid chain; its full sequence is Probable nicotinate-nucleotide adenylyltransferase (201 aa).

It belongs to the NadD family.

The enzyme catalyses nicotinate beta-D-ribonucleotide + ATP + H(+) = deamido-NAD(+) + diphosphate. It functions in the pathway cofactor biosynthesis; NAD(+) biosynthesis; deamido-NAD(+) from nicotinate D-ribonucleotide: step 1/1. In terms of biological role, catalyzes the reversible adenylation of nicotinate mononucleotide (NaMN) to nicotinic acid adenine dinucleotide (NaAD). The sequence is that of Probable nicotinate-nucleotide adenylyltransferase from Bacteroides fragilis (strain YCH46).